The primary structure comprises 264 residues: S-adenosylmethionine decarboxylase proenzyme (264 aa).

Catalysis depends on serine 112, which acts as the Schiff-base intermediate with substrate; via pyruvic acid. Serine 112 is modified (pyruvic acid (Ser); by autocatalysis). Histidine 117 serves as the catalytic Proton acceptor; for processing activity. The active-site Proton donor; for catalytic activity is cysteine 140.

It belongs to the prokaryotic AdoMetDC family. Type 2 subfamily. As to quaternary structure, heterooctamer of four alpha and four beta chains arranged as a tetramer of alpha/beta heterodimers. Pyruvate serves as cofactor. Is synthesized initially as an inactive proenzyme. Formation of the active enzyme involves a self-maturation process in which the active site pyruvoyl group is generated from an internal serine residue via an autocatalytic post-translational modification. Two non-identical subunits are generated from the proenzyme in this reaction, and the pyruvate is formed at the N-terminus of the alpha chain, which is derived from the carboxyl end of the proenzyme. The post-translation cleavage follows an unusual pathway, termed non-hydrolytic serinolysis, in which the side chain hydroxyl group of the serine supplies its oxygen atom to form the C-terminus of the beta chain, while the remainder of the serine residue undergoes an oxidative deamination to produce ammonia and the pyruvoyl group blocking the N-terminus of the alpha chain.

The catalysed reaction is S-adenosyl-L-methionine + H(+) = S-adenosyl 3-(methylsulfanyl)propylamine + CO2. It functions in the pathway amine and polyamine biosynthesis; S-adenosylmethioninamine biosynthesis; S-adenosylmethioninamine from S-adenosyl-L-methionine: step 1/1. In terms of biological role, catalyzes the decarboxylation of S-adenosylmethionine to S-adenosylmethioninamine (dcAdoMet), the propylamine donor required for the synthesis of the polyamines spermine and spermidine from the diamine putrescine. This Citrobacter koseri (strain ATCC BAA-895 / CDC 4225-83 / SGSC4696) protein is S-adenosylmethionine decarboxylase proenzyme.